Here is a 347-residue protein sequence, read N- to C-terminus: MQVTRIIPDVPSFLASMMTFDTWSILFMVVQSLVIFLVVVIVAAMMIIYERRMLALWQDRYGPNRVGPFGSLQLVADMLKIFFKEDWTPNFTDKFMFTLAPAVAMFTALASFAIIPISPTLGVADWDIGILFFFAMAGIAVYAVLFGGWASANKFSLLGGLRSAAQTISYEVFLGLSLMGVVALTGSFNLRAIVEAQADGWYIIPQFFGFLTFVVAGVAVTHRHPFDQPEAEQELAEGYHVEYSGMKFGMFFIGEYVNVVLISALMTCLFFGGWLAPFNLDIPFIPPAFWFMIKTLFFMTMFVLARGSLMRPRYDQVMNFGWKVCLPVTLINLLVTAAVILIFSPTL.

8 consecutive transmembrane segments (helical) span residues 25 to 45 (ILFMVVQSLVIFLVVVIVAAM), 95 to 115 (FMFTLAPAVAMFTALASFAII), 128 to 148 (IGILFFFAMAGIAVYAVLFGG), 168 to 188 (ISYEVFLGLSLMGVVALTGSF), 200 to 220 (GWYIIPQFFGFLTFVVAGVAV), 251 to 271 (FFIGEYVNVVLISALMTCLFF), 284 to 304 (FIPPAFWFMIKTLFFMTMFVL), and 324 to 344 (VCLPVTLINLLVTAAVILIFS).

This sequence belongs to the complex I subunit 1 family. As to quaternary structure, NDH-1 is composed of 14 different subunits. Subunits NuoA, H, J, K, L, M, N constitute the membrane sector of the complex.

Its subcellular location is the cell inner membrane. The catalysed reaction is a quinone + NADH + 5 H(+)(in) = a quinol + NAD(+) + 4 H(+)(out). In terms of biological role, NDH-1 shuttles electrons from NADH, via FMN and iron-sulfur (Fe-S) centers, to quinones in the respiratory chain. The immediate electron acceptor for the enzyme in this species is believed to be ubiquinone. Couples the redox reaction to proton translocation (for every two electrons transferred, four hydrogen ions are translocated across the cytoplasmic membrane), and thus conserves the redox energy in a proton gradient. This subunit may bind ubiquinone. In Psychrobacter cryohalolentis (strain ATCC BAA-1226 / DSM 17306 / VKM B-2378 / K5), this protein is NADH-quinone oxidoreductase subunit H.